A 236-amino-acid chain; its full sequence is Purine nucleoside phosphorylase DeoD-type (236 aa).

H5 lines the a purine D-ribonucleoside pocket. Residues G21, R25, R44, and 88–91 (RIGS) contribute to the phosphate site. A purine D-ribonucleoside is bound by residues 180-182 (EME) and 204-205 (SD). Residue D205 is the Proton donor of the active site.

This sequence belongs to the PNP/UDP phosphorylase family. In terms of assembly, homohexamer; trimer of homodimers.

It carries out the reaction a purine D-ribonucleoside + phosphate = a purine nucleobase + alpha-D-ribose 1-phosphate. The enzyme catalyses a purine 2'-deoxy-D-ribonucleoside + phosphate = a purine nucleobase + 2-deoxy-alpha-D-ribose 1-phosphate. In terms of biological role, catalyzes the reversible phosphorolytic breakdown of the N-glycosidic bond in the beta-(deoxy)ribonucleoside molecules, with the formation of the corresponding free purine bases and pentose-1-phosphate. The protein is Purine nucleoside phosphorylase DeoD-type of Tolumonas auensis (strain DSM 9187 / NBRC 110442 / TA 4).